We begin with the raw amino-acid sequence, 94 residues long: uncharacterized protein (94 aa).

This is an uncharacterized protein from Treponema pallidum (strain Nichols).